Reading from the N-terminus, the 109-residue chain is UPF0122 protein CLL_A1244 (109 aa).

It belongs to the UPF0122 family.

Functionally, might take part in the signal recognition particle (SRP) pathway. This is inferred from the conservation of its genetic proximity to ftsY/ffh. May be a regulatory protein. This Clostridium botulinum (strain Eklund 17B / Type B) protein is UPF0122 protein CLL_A1244.